The chain runs to 222 residues: DNA mismatch repair protein MutH (222 aa).

Belongs to the MutH family.

It localises to the cytoplasm. In terms of biological role, sequence-specific endonuclease that cleaves unmethylated GATC sequences. It is involved in DNA mismatch repair. This is DNA mismatch repair protein MutH from Pasteurella multocida (strain Pm70).